The sequence spans 512 residues: Maturase K (512 aa).

This sequence belongs to the intron maturase 2 family. MatK subfamily.

It is found in the plastid. It localises to the chloroplast. Functionally, usually encoded in the trnK tRNA gene intron. Probably assists in splicing its own and other chloroplast group II introns. This Piper cenocladum (Ant piper) protein is Maturase K.